The primary structure comprises 417 residues: Tryptophan decarboxylase (417 aa).

K263 bears the N6-(pyridoxal phosphate)lysine mark.

Belongs to the group II decarboxylase family. Pyridoxal 5'-phosphate serves as cofactor.

It localises to the cytoplasm. The enzyme catalyses L-tryptophan + H(+) = tryptamine + CO2. With respect to regulation, inhibited by (S)-alpha-fluoromethyltryptophan. Catalyzes the decarboxylation of tryptophan to tryptamine. Tryptamine is a neurotransmitter that induces the release of serotonin, which is suggested to modulate gastrointestinal motility. Therefore, the tryptophan decarboxylase from the gut bacteria Clostridium sporogenes (strain ATCC 15579) may influence host brain and behavior. Has weak activity with tyrosine. Activity against phenylalanine is undetectable. The polypeptide is Tryptophan decarboxylase (Clostridium sporogenes (strain ATCC 15579)).